The following is a 367-amino-acid chain: ABI gene family member 3 (367 aa).

Positions 36–64 form a coiled coil; sequence CEDNYLQATDKRKALEETMAFTTQALASV. A disordered region spans residues 163–273; that stretch reads LSRTGTLSRK…LEVSQPPLEA (111 aa). The span at 206-225 shows a compositional bias: low complexity; it reads SAASSASSLASAGSAEGASG. Phosphoserine is present on residues serine 216 and serine 219. The segment covering 236-264 has biased composition (pro residues); sequence ATPPPPPVAPVTPPPPPLSAEVFLPPPPL. Positions 309–367 constitute an SH3 domain; it reads SYLEKVVTLYPYTRQKDNELSFSEGTVICVTRRYSDGWCEGVSSEGTGFFPGNYVEPSC. Residue serine 343 is modified to Phosphoserine.

This sequence belongs to the ABI family. In terms of assembly, may interact with PAK1 and PAK2. Probably interacts with TARSH.

Its subcellular location is the cytoplasm. Functionally, inhibits ectopic tumor cell metastasis of SRD cells. In vitro, reduces cell motility. The protein is ABI gene family member 3 (Abi3) of Mus musculus (Mouse).